The following is a 467-amino-acid chain: Argininosuccinate lyase (467 aa).

It belongs to the lyase 1 family. Argininosuccinate lyase subfamily.

It is found in the cytoplasm. It catalyses the reaction 2-(N(omega)-L-arginino)succinate = fumarate + L-arginine. It participates in amino-acid biosynthesis; L-arginine biosynthesis; L-arginine from L-ornithine and carbamoyl phosphate: step 3/3. This Campylobacter curvus (strain 525.92) protein is Argininosuccinate lyase.